The sequence spans 72 residues: Antitoxin VapB11 (72 aa).

Its function is as follows. Antitoxin component of a type II toxin-antitoxin (TA) system. This chain is Antitoxin VapB11 (vapB11), found in Mycobacterium tuberculosis (strain CDC 1551 / Oshkosh).